Consider the following 282-residue polypeptide: Bifunctional protein FolD 2 (282 aa).

Residues 164-166 (GRS) and S189 contribute to the NADP(+) site.

The protein belongs to the tetrahydrofolate dehydrogenase/cyclohydrolase family. In terms of assembly, homodimer.

It carries out the reaction (6R)-5,10-methylene-5,6,7,8-tetrahydrofolate + NADP(+) = (6R)-5,10-methenyltetrahydrofolate + NADPH. The catalysed reaction is (6R)-5,10-methenyltetrahydrofolate + H2O = (6R)-10-formyltetrahydrofolate + H(+). Its pathway is one-carbon metabolism; tetrahydrofolate interconversion. Catalyzes the oxidation of 5,10-methylenetetrahydrofolate to 5,10-methenyltetrahydrofolate and then the hydrolysis of 5,10-methenyltetrahydrofolate to 10-formyltetrahydrofolate. The chain is Bifunctional protein FolD 2 from Lactobacillus johnsonii (strain CNCM I-12250 / La1 / NCC 533).